Consider the following 48-residue polypeptide: Delta-stichotoxin-Hmg4a (48 aa).

3 disulfides stabilise this stretch: cysteine 3-cysteine 43, cysteine 5-cysteine 33, and cysteine 26-cysteine 44.

Belongs to the sea anemone sodium channel inhibitory toxin family. Type II subfamily.

The protein resides in the secreted. The protein localises to the nematocyst. Functionally, binds specifically to voltage-gated sodium channels (Nav), thereby delaying their inactivation during signal transduction. Its toxicity is weaker than that of RpIII (AC P08380). The protein is Delta-stichotoxin-Hmg4a of Heteractis magnifica (Magnificent sea anemone).